The following is a 288-amino-acid chain: Ankyrin repeat and SOCS box protein 8 (288 aa).

Phosphoserine is present on Ser-17. 4 ANK repeats span residues 52–81 (GTLK…EVNA), 85–113 (YNRT…NPNA), 117–146 (NRDT…SVNA), and 150–179 (NNDT…EVRV). Positions 235-288 (QLCEKLTVLCSAPGTLKTLARYAVRRSLGLQYLPDAVKGLPLPVSLKDYLLLLE) constitute an SOCS box domain.

This sequence belongs to the ankyrin SOCS box (ASB) family. In terms of assembly, interacts with TBK1; this interaction promotes TBK1 proteasomal degradation. In terms of processing, phosphorylated by TBK1.

It localises to the cytoplasm. Its pathway is protein modification; protein ubiquitination. Functionally, may be a substrate-recognition component of a SCF-like ECS (Elongin-Cullin-SOCS-box protein) E3 ubiquitin-protein ligase complex which mediates the ubiquitination and subsequent proteasomal degradation of target proteins. Inhibits IFN-beta production through the IRF3 signaling pathway by targeting TBK1 via 'Lys-48'-linked ubiquitination, leading to its proteasomal degradation. This chain is Ankyrin repeat and SOCS box protein 8 (Asb8), found in Mus musculus (Mouse).